We begin with the raw amino-acid sequence, 92 residues long: Small ribosomal subunit protein bS20 (92 aa).

Positions 1–23 (MANTPSAKKRAKQAEKRRSHNAS) are disordered. Residues 7–20 (AKKRAKQAEKRRSH) show a composition bias toward basic residues.

The protein belongs to the bacterial ribosomal protein bS20 family.

Binds directly to 16S ribosomal RNA. This Pseudomonas fluorescens (strain SBW25) protein is Small ribosomal subunit protein bS20.